Here is a 575-residue protein sequence, read N- to C-terminus: Proline--tRNA ligase (575 aa).

The protein belongs to the class-II aminoacyl-tRNA synthetase family. ProS type 1 subfamily. Homodimer.

Its subcellular location is the cytoplasm. It carries out the reaction tRNA(Pro) + L-proline + ATP = L-prolyl-tRNA(Pro) + AMP + diphosphate. Its function is as follows. Catalyzes the attachment of proline to tRNA(Pro) in a two-step reaction: proline is first activated by ATP to form Pro-AMP and then transferred to the acceptor end of tRNA(Pro). As ProRS can inadvertently accommodate and process non-cognate amino acids such as alanine and cysteine, to avoid such errors it has two additional distinct editing activities against alanine. One activity is designated as 'pretransfer' editing and involves the tRNA(Pro)-independent hydrolysis of activated Ala-AMP. The other activity is designated 'posttransfer' editing and involves deacylation of mischarged Ala-tRNA(Pro). The misacylated Cys-tRNA(Pro) is not edited by ProRS. This is Proline--tRNA ligase from Desulfitobacterium hafniense (strain DSM 10664 / DCB-2).